We begin with the raw amino-acid sequence, 45 residues long: DNA-directed RNA polymerase subunit Rpo12 (45 aa).

Residues cysteine 8, cysteine 23, and cysteine 26 each contribute to the Zn(2+) site.

It belongs to the archaeal Rpo12/eukaryotic RPC10 RNA polymerase subunit family. In terms of assembly, part of the RNA polymerase complex. Zn(2+) serves as cofactor.

The protein localises to the cytoplasm. It carries out the reaction RNA(n) + a ribonucleoside 5'-triphosphate = RNA(n+1) + diphosphate. Its function is as follows. DNA-dependent RNA polymerase (RNAP) catalyzes the transcription of DNA into RNA using the four ribonucleoside triphosphates as substrates. This is DNA-directed RNA polymerase subunit Rpo12 from Methanosarcina acetivorans (strain ATCC 35395 / DSM 2834 / JCM 12185 / C2A).